Consider the following 657-residue polypeptide: Wall-associated receptor kinase-like 20 (657 aa).

A signal peptide spans 1-23 (MEKKRSYYALLIPTLLTVWLACA). Over 24 to 293 (GHSCARHAKA…KHCKKKKKTV (270 aa)) the chain is Extracellular. Asn140 carries an N-linked (GlcNAc...) asparagine glycan. Residues 294-314 (VFAGAAVAVVGVTLAIAVAVI) traverse the membrane as a helical segment. At 315-657 (GTKHSHQKVK…NILSQEVTET (343 aa)) the chain is on the cytoplasmic side. The Protein kinase domain occupies 363–646 (FSKDNLIGTG…KEVADEIEYI (284 aa)). ATP-binding positions include 369–377 (IGTGGFGEV) and Lys391. Residue Asp490 is the Proton acceptor of the active site.

This sequence belongs to the protein kinase superfamily. Ser/Thr protein kinase family.

Its subcellular location is the membrane. It carries out the reaction L-seryl-[protein] + ATP = O-phospho-L-seryl-[protein] + ADP + H(+). The catalysed reaction is L-threonyl-[protein] + ATP = O-phospho-L-threonyl-[protein] + ADP + H(+). Functionally, serine/threonine-protein kinase that may function as a signaling receptor of extracellular matrix component. In Arabidopsis thaliana (Mouse-ear cress), this protein is Wall-associated receptor kinase-like 20 (WAKL20).